We begin with the raw amino-acid sequence, 209 residues long: Uracil phosphoribosyltransferase (209 aa).

5-phospho-alpha-D-ribose 1-diphosphate-binding positions include arginine 79, arginine 104, and 131–139 (DPMLATGAS). Uracil-binding positions include isoleucine 194 and 199–201 (GDA). Aspartate 200 provides a ligand contact to 5-phospho-alpha-D-ribose 1-diphosphate.

Belongs to the UPRTase family. It depends on Mg(2+) as a cofactor.

The catalysed reaction is UMP + diphosphate = 5-phospho-alpha-D-ribose 1-diphosphate + uracil. It functions in the pathway pyrimidine metabolism; UMP biosynthesis via salvage pathway; UMP from uracil: step 1/1. Allosterically activated by GTP. In terms of biological role, catalyzes the conversion of uracil and 5-phospho-alpha-D-ribose 1-diphosphate (PRPP) to UMP and diphosphate. The protein is Uracil phosphoribosyltransferase of Staphylococcus epidermidis (strain ATCC 35984 / DSM 28319 / BCRC 17069 / CCUG 31568 / BM 3577 / RP62A).